The sequence spans 399 residues: Probable dual-specificity RNA methyltransferase RlmN (399 aa).

Glu-102 (proton acceptor) is an active-site residue. Residues 108-385 (YLDRATVCVS…CTVRVERGVA (278 aa)) form the Radical SAM core domain. A disulfide bond links Cys-115 and Cys-390. [4Fe-4S] cluster is bound by residues Cys-122, Cys-126, and Cys-129. Residues 207–208 (GE), Ser-239, 262–264 (SLH), and Asn-347 contribute to the S-adenosyl-L-methionine site. Residue Cys-390 is the S-methylcysteine intermediate of the active site.

The protein belongs to the radical SAM superfamily. RlmN family. Requires [4Fe-4S] cluster as cofactor.

It is found in the cytoplasm. The catalysed reaction is adenosine(2503) in 23S rRNA + 2 reduced [2Fe-2S]-[ferredoxin] + 2 S-adenosyl-L-methionine = 2-methyladenosine(2503) in 23S rRNA + 5'-deoxyadenosine + L-methionine + 2 oxidized [2Fe-2S]-[ferredoxin] + S-adenosyl-L-homocysteine. It catalyses the reaction adenosine(37) in tRNA + 2 reduced [2Fe-2S]-[ferredoxin] + 2 S-adenosyl-L-methionine = 2-methyladenosine(37) in tRNA + 5'-deoxyadenosine + L-methionine + 2 oxidized [2Fe-2S]-[ferredoxin] + S-adenosyl-L-homocysteine. Specifically methylates position 2 of adenine 2503 in 23S rRNA and position 2 of adenine 37 in tRNAs. The sequence is that of Probable dual-specificity RNA methyltransferase RlmN from Roseiflexus castenholzii (strain DSM 13941 / HLO8).